The following is a 347-amino-acid chain: tRNA(Ile)-lysidine synthase (347 aa).

27-32 contacts ATP; it reads SGGADS. The interval 243-263 is disordered; the sequence is AAPASPSHVEGEASAPHDAAH.

Belongs to the tRNA(Ile)-lysidine synthase family.

The protein localises to the cytoplasm. The enzyme catalyses cytidine(34) in tRNA(Ile2) + L-lysine + ATP = lysidine(34) in tRNA(Ile2) + AMP + diphosphate + H(+). Ligates lysine onto the cytidine present at position 34 of the AUA codon-specific tRNA(Ile) that contains the anticodon CAU, in an ATP-dependent manner. Cytidine is converted to lysidine, thus changing the amino acid specificity of the tRNA from methionine to isoleucine. The chain is tRNA(Ile)-lysidine synthase from Nitratidesulfovibrio vulgaris (strain ATCC 29579 / DSM 644 / CCUG 34227 / NCIMB 8303 / VKM B-1760 / Hildenborough) (Desulfovibrio vulgaris).